Reading from the N-terminus, the 428-residue chain is Histone deacetylase 3 (428 aa).

Residues 3-316 (NRTAYFYDPD…WTFETSLLVE (314 aa)) are histone deacetylase. Residues His-17, Gly-21, and Lys-25 each contribute to the 1D-myo-inositol 1,4,5,6-tetrakisphosphate site. His-135 is a catalytic residue. Residues Asp-170, His-172, and Asp-259 each contribute to the Zn(2+) site. Residue Arg-265 participates in 1D-myo-inositol 1,4,5,6-tetrakisphosphate binding. The segment at 381–428 (PSDLLSYERPDEADPEERGSEENFSRPEAANEFYDGDHDHDKESDVEI) is disordered. 2 stretches are compositionally biased toward basic and acidic residues: residues 386–405 (SYER…ENFS) and 415–428 (DGDH…DVEI).

The protein belongs to the histone deacetylase family. HD type 1 subfamily.

The protein resides in the nucleus. It is found in the chromosome. The protein localises to the cytoplasm. It localises to the cytosol. It catalyses the reaction N(6)-acetyl-L-lysyl-[histone] + H2O = L-lysyl-[histone] + acetate. The enzyme catalyses N(6)-acetyl-L-lysyl-[protein] + H2O = L-lysyl-[protein] + acetate. It carries out the reaction N(6)-(2E)-butenoyl-L-lysyl-[protein] + H2O = (2E)-2-butenoate + L-lysyl-[protein]. The catalysed reaction is N(6)-(2-hydroxyisobutanoyl)-L-lysyl-[protein] + H2O = 2-hydroxy-2-methylpropanoate + L-lysyl-[protein]. It catalyses the reaction N(6)-[(S)-lactoyl]-L-lysyl-[protein] + H2O = (S)-lactate + L-lysyl-[protein]. With respect to regulation, inositol tetraphosphate (1D-myo-inositol 1,4,5,6-tetrakisphosphate) promotes the histone deacetylase activity by acting as an intermolecular glue between hdac3 and N-Cor repressor complex components. In terms of biological role, histone deacetylase that catalyzes the deacetylation of lysine residues on the N-terminal part of the core histones (H2A, H2B, H3 and H4), and some other non-histone substrates. Histone deacetylation gives a tag for epigenetic repression and plays an important role in transcriptional regulation, cell cycle progression and developmental events. Histone deacetylases act via the formation of large multiprotein complexes, such as N-Cor repressor complex, which activate the histone deacetylase activity. Participates in the BCL6 transcriptional repressor activity by deacetylating the H3 'Lys-27' (H3K27) on enhancer elements, antagonizing EP300 acetyltransferase activity and repressing proximal gene expression. Also functions as a deacetylase for non-histone targets. In addition to protein deacetylase activity, also acts as a protein-lysine deacylase by recognizing other acyl groups: catalyzes removal of (2E)-butenoyl (crotonyl), lactoyl (lactyl) and 2-hydroxyisobutanoyl (2-hydroxyisobutyryl) acyl groups from lysine residues, leading to protein decrotonylation, delactylation and de-2-hydroxyisobutyrylation, respectively. The sequence is that of Histone deacetylase 3 (hdac3) from Danio rerio (Zebrafish).